Reading from the N-terminus, the 548-residue chain is MDSQRNLLVIALLFVSFMIWQAWEQDKNPQPQTQQTTQTTTTAAGSAADQGVPASGQGKMITVKTDVLDLTINTRGGDVEQALLPAYPKELGSNEPFQLLETTPQFIYQAQSGLTGRDGPDNPANGPRPLYNVEKDAFVLADGQNELQVPMTYTDAAGNTFTKTFVFKRGDYAVNVNYSVQNTGEKPLEVSTFGQLKQSVNLPPHRDTGSSNFALHTFRGAAYSTPDEKYEKYKFDTIADNENLNVSSKGGWVAMLQQYFATAWIPRNDGTNNFYTANLGNGIVAIGYKAQPVLVQPGQTGAMTSTLWVGPEIQDKMAAVAPHLDLTVDYGWLWFISQPLFKLLKWIHSFVGNWGFSIIIITFIVRGIMYPLTKAQYTSMAKMRMLQPKIQAMRERLGDDKQRQSQEMMALYKAEKVNPLGGCFPLIIQMPIFLALYYMLMGSIELRHAPFALWIHDLSAQDPYYILPILMGVTMFFIQKMSPTTVTDPMQQKIMTFMPVIFTVFFLWFPSGLVLYYIVSNLVTIIQQQLIYRGLEKRGLHSREKKKS.

A helical membrane pass occupies residues 6-26 (NLLVIALLFVSFMIWQAWEQD). Residues 28 to 56 (NPQPQTQQTTQTTTTAAGSAADQGVPASG) form a disordered region. The segment covering 29–42 (PQPQTQQTTQTTTT) has biased composition (low complexity). Transmembrane regions (helical) follow at residues 350–370 (FVGN…GIMY), 424–444 (FPLI…MGSI), 458–478 (LSAQ…MFFI), and 499–519 (PVIF…YYIV).

The protein belongs to the OXA1/ALB3/YidC family. Type 1 subfamily. As to quaternary structure, interacts with the Sec translocase complex via SecD. Specifically interacts with transmembrane segments of nascent integral membrane proteins during membrane integration.

The protein localises to the cell inner membrane. Functionally, required for the insertion and/or proper folding and/or complex formation of integral membrane proteins into the membrane. Involved in integration of membrane proteins that insert both dependently and independently of the Sec translocase complex, as well as at least some lipoproteins. Aids folding of multispanning membrane proteins. This chain is Membrane protein insertase YidC, found in Salmonella agona (strain SL483).